A 514-amino-acid chain; its full sequence is Nucleus accumbens-associated protein 1 (514 aa).

The BTB domain maps to 30–94 (CDVSVVVKGH…CYTGRLSMNM (65 aa)). Lysine 167 is covalently cross-linked (Glycyl lysine isopeptide (Lys-Gly) (interchain with G-Cter in SUMO1); alternate). A Glycyl lysine isopeptide (Lys-Gly) (interchain with G-Cter in SUMO2); alternate cross-link involves residue lysine 167. A Glycyl lysine isopeptide (Lys-Gly) (interchain with G-Cter in SUMO2) cross-link involves residue lysine 182. Disordered stretches follow at residues 183-205 (RLWDSSQKEAGGSGGNNGSRKMA) and 242-279 (PSMSERTSPGTSSAYTSDSPSSYHNEEDEEEDAGEEGT). At serine 187 the chain carries Phosphoserine. The span at 242-251 (PSMSERTSPG) shows a compositional bias: polar residues. The residue at position 245 (serine 245) is a Phosphoserine; by PKC. Residues 252 to 264 (TSSAYTSDSPSSY) show a composition bias toward low complexity. Residues 267–279 (EEDEEEDAGEEGT) are compositionally biased toward acidic residues. Residues lysine 304, lysine 438, lysine 466, and lysine 485 each participate in a glycyl lysine isopeptide (Lys-Gly) (interchain with G-Cter in SUMO2) cross-link. In terms of domain architecture, BEN spans 360–457 (GTNVYITRAQ…DMCTNARRVV (98 aa)). Phosphoserine is present on residues serine 492 and serine 496.

Homooligomer; mediated by the BTB domain. Interacts with HDAC3 and HDAC4. Interacts (via BTB domain) with CUL3, PSMD7 and RCOR1. As to expression, ubiquitously expressed with higher expression in the brain, kidney and liver, and at lower levels in heart, lung and testes.

It is found in the nucleus. It localises to the cytoplasm. In terms of biological role, functions as a transcriptional repressor. Seems to function as a transcriptional corepressor in neuronal cells through recruitment of HDAC3 and HDAC4. Contributes to tumor progression, and tumor cell proliferation and survival. This may be mediated at least in part through repressing transcriptional activity of GADD45GIP1. Required for recruiting the proteasome from the nucleus to the cytoplasm and dendritic spines. Involved in the acute behavioral and neurological responses to cocaine and amphetamines. This Mus musculus (Mouse) protein is Nucleus accumbens-associated protein 1 (Nacc1).